A 348-amino-acid chain; its full sequence is UDP-3-O-acylglucosamine N-acyltransferase (348 aa).

His-257 acts as the Proton acceptor in catalysis.

This sequence belongs to the transferase hexapeptide repeat family. LpxD subfamily. As to quaternary structure, homotrimer.

The catalysed reaction is a UDP-3-O-[(3R)-3-hydroxyacyl]-alpha-D-glucosamine + a (3R)-hydroxyacyl-[ACP] = a UDP-2-N,3-O-bis[(3R)-3-hydroxyacyl]-alpha-D-glucosamine + holo-[ACP] + H(+). It participates in bacterial outer membrane biogenesis; LPS lipid A biosynthesis. In terms of biological role, catalyzes the N-acylation of UDP-3-O-acylglucosamine using 3-hydroxyacyl-ACP as the acyl donor. Is involved in the biosynthesis of lipid A, a phosphorylated glycolipid that anchors the lipopolysaccharide to the outer membrane of the cell. This chain is UDP-3-O-acylglucosamine N-acyltransferase, found in Bartonella quintana (strain Toulouse) (Rochalimaea quintana).